A 330-amino-acid polypeptide reads, in one-letter code: ADP-L-glycero-D-manno-heptose-6-epimerase (330 aa).

NADP(+)-binding positions include 10 to 11, 31 to 32, Lys38, Lys53, 74 to 78, and Asn91; these read FI, DD, and QGACS. The active-site Proton acceptor is the Tyr138. Residue Lys142 participates in NADP(+) binding. Asn167 provides a ligand contact to substrate. Val168 and Lys176 together coordinate NADP(+). Lys176 serves as the catalytic Proton acceptor. Substrate contacts are provided by residues Arg178, His185, 199–202, Arg212, and Tyr291; that span reads FAGW.

This sequence belongs to the NAD(P)-dependent epimerase/dehydratase family. HldD subfamily. As to quaternary structure, homopentamer. NADP(+) serves as cofactor.

It catalyses the reaction ADP-D-glycero-beta-D-manno-heptose = ADP-L-glycero-beta-D-manno-heptose. Its pathway is nucleotide-sugar biosynthesis; ADP-L-glycero-beta-D-manno-heptose biosynthesis; ADP-L-glycero-beta-D-manno-heptose from D-glycero-beta-D-manno-heptose 7-phosphate: step 4/4. Functionally, catalyzes the interconversion between ADP-D-glycero-beta-D-manno-heptose and ADP-L-glycero-beta-D-manno-heptose via an epimerization at carbon 6 of the heptose. The chain is ADP-L-glycero-D-manno-heptose-6-epimerase from Bordetella petrii (strain ATCC BAA-461 / DSM 12804 / CCUG 43448).